Consider the following 344-residue polypeptide: Putative voltage-gated potassium channel subunit beta (344 aa).

Residues W33, D62, Y67, S167, Q193, W222, S223, P224, L225, K233, R243, G301, S303, Q307, E310, and N311 each contribute to the NADP(+) site. The active-site Proton donor/acceptor is the Y67.

The protein belongs to the shaker potassium channel beta subunit family. In terms of assembly, forms heteromultimeric complexes with potassium channel alpha subunits.

Its subcellular location is the cytoplasm. The protein resides in the nucleus. Functionally, probable accessory potassium channel protein which modulates the activity of the pore-forming alpha subunit. The protein is Putative voltage-gated potassium channel subunit beta of Schizosaccharomyces pombe (strain 972 / ATCC 24843) (Fission yeast).